Here is a 189-residue protein sequence, read N- to C-terminus: NADH-quinone oxidoreductase subunit B (189 aa).

[4Fe-4S] cluster contacts are provided by Cys39, Cys40, Cys104, and Cys135.

This sequence belongs to the complex I 20 kDa subunit family. As to quaternary structure, NDH-1 is composed of 14 different subunits. Subunits NuoB, C, D, E, F, and G constitute the peripheral sector of the complex. [4Fe-4S] cluster is required as a cofactor.

The protein resides in the cell inner membrane. The catalysed reaction is a quinone + NADH + 5 H(+)(in) = a quinol + NAD(+) + 4 H(+)(out). In terms of biological role, NDH-1 shuttles electrons from NADH, via FMN and iron-sulfur (Fe-S) centers, to quinones in the respiratory chain. The immediate electron acceptor for the enzyme in this species is believed to be a menaquinone. Couples the redox reaction to proton translocation (for every two electrons transferred, four hydrogen ions are translocated across the cytoplasmic membrane), and thus conserves the redox energy in a proton gradient. This is NADH-quinone oxidoreductase subunit B from Chlorobaculum parvum (strain DSM 263 / NCIMB 8327) (Chlorobium vibrioforme subsp. thiosulfatophilum).